Here is a 784-residue protein sequence, read N- to C-terminus: ATP-dependent 6-phosphofructokinase, platelet type (784 aa).

Residue methionine 1 is modified to N-acetylmethionine. The interval 1–399 (MDADDSRAPK…NLNTYKRLAI (399 aa)) is N-terminal catalytic PFK domain 1. Residues serine 6, serine 12, and serine 21 each carry the phosphoserine modification. ATP is bound by residues glycine 34, 97–98 (RC), and 127–130 (GDGS). Mg(2+) is bound at residue aspartate 128. Residue serine 142 is modified to Phosphoserine. Residues 173–175 (SID), arginine 210, 217–219 (MGR), glutamate 273, arginine 301, and 307–310 (HVQR) each bind substrate. The Proton acceptor role is filled by aspartate 175. Serine 386 carries the post-translational modification Phosphoserine. N6-acetyllysine is present on lysine 395. Residues 400-411 (KLPDDQIPKTNC) form an interdomain linker region. Positions 412 to 784 (NVAVINVGAP…QLEHVQPWSV (373 aa)) are C-terminal regulatory PFK domain 2. A beta-D-fructose 2,6-bisphosphate-binding site is contributed by arginine 481. Lysine 486 is subject to N6-acetyllysine. Residues 538-542 (TVSNN), arginine 576, 583-585 (MGG), and glutamate 639 each bind beta-D-fructose 2,6-bisphosphate. Serine 540 carries O-linked (GlcNAc) serine glycosylation. Residue tyrosine 651 is modified to Phosphotyrosine. Beta-D-fructose 2,6-bisphosphate is bound by residues arginine 665 and 671–674 (HMQQ). Position 688 is an N6-acetyllysine (lysine 688). Residue arginine 744 coordinates beta-D-fructose 2,6-bisphosphate. Serine 783 carries the phosphoserine modification.

This sequence belongs to the phosphofructokinase type A (PFKA) family. ATP-dependent PFK group I subfamily. Eukaryotic two domain clade 'E' sub-subfamily. As to quaternary structure, homo- and heterotetramers. Phosphofructokinase (PFK) enzyme functions as a tetramer composed of different combinations of 3 types of subunits, called PFKM (M), PFKL (L) and PFKP (P). The composition of the PFK tetramer differs according to the tissue type it is present in. The kinetic and regulatory properties of the tetrameric enzyme are dependent on the subunit composition, hence can vary across tissues. Interacts with ATG4B; promoting phosphorylation of ATG4B. Requires Mg(2+) as cofactor. GlcNAcylation decreases enzyme activity. In terms of processing, phosphorylation at Ser-386 promotes interaction with ATG4B.

Its subcellular location is the cytoplasm. The enzyme catalyses beta-D-fructose 6-phosphate + ATP = beta-D-fructose 1,6-bisphosphate + ADP + H(+). It participates in carbohydrate degradation; glycolysis; D-glyceraldehyde 3-phosphate and glycerone phosphate from D-glucose: step 3/4. Its activity is regulated as follows. Allosterically activated by ADP, AMP, or fructose 2,6-bisphosphate, and allosterically inhibited by ATP or citrate. Catalyzes the phosphorylation of D-fructose 6-phosphate to fructose 1,6-bisphosphate by ATP, the first committing step of glycolysis. This is ATP-dependent 6-phosphofructokinase, platelet type (PFKP) from Pongo abelii (Sumatran orangutan).